The sequence spans 455 residues: Zinc finger SWIM domain-containing protein 1 (455 aa).

The segment at 264–288 (ASLSLAETPQDSHTPSEASAENPNT) is disordered. The segment at 333–375 (MSIQILEDTHTVQPQPPASCSCYFNQAFHLPCRHILAMLSARQ) adopts an SWIM-type zinc-finger fold.

The sequence is that of Zinc finger SWIM domain-containing protein 1 (Zswim1) from Mus musculus (Mouse).